Reading from the N-terminus, the 177-residue chain is ATP synthase subunit delta (177 aa).

Belongs to the ATPase delta chain family. F-type ATPases have 2 components, F(1) - the catalytic core - and F(0) - the membrane proton channel. F(1) has five subunits: alpha(3), beta(3), gamma(1), delta(1), epsilon(1). F(0) has three main subunits: a(1), b(2) and c(10-14). The alpha and beta chains form an alternating ring which encloses part of the gamma chain. F(1) is attached to F(0) by a central stalk formed by the gamma and epsilon chains, while a peripheral stalk is formed by the delta and b chains.

It is found in the cell inner membrane. In terms of biological role, f(1)F(0) ATP synthase produces ATP from ADP in the presence of a proton or sodium gradient. F-type ATPases consist of two structural domains, F(1) containing the extramembraneous catalytic core and F(0) containing the membrane proton channel, linked together by a central stalk and a peripheral stalk. During catalysis, ATP synthesis in the catalytic domain of F(1) is coupled via a rotary mechanism of the central stalk subunits to proton translocation. This protein is part of the stalk that links CF(0) to CF(1). It either transmits conformational changes from CF(0) to CF(1) or is implicated in proton conduction. The polypeptide is ATP synthase subunit delta (Shigella flexneri).